The chain runs to 907 residues: Glutamate receptor 1 (907 aa).

The signal sequence occupies residues 1–18 (MPYIFAFFCTGFLGAVVG). Residues 19 to 536 (ANFPNNIQIG…GVFSFLDPLA (518 aa)) are Extracellular-facing. Asn-63, Asn-249, Asn-257, Asn-363, Asn-401, and Asn-406 each carry an N-linked (GlcNAc...) asparagine glycan. A disulfide bridge connects residues Cys-75 and Cys-323. 3 residues coordinate L-glutamate: Pro-492, Thr-494, and Arg-499. A helical membrane pass occupies residues 537–557 (YEIWMCIVFAYIGVSVVLFLV). The Cytoplasmic portion of the chain corresponds to 558 to 584 (SRFSPYEWHSEEFEEGRDQTTSDQSNE). The helical; Pore-forming intramembrane region spans 585–600 (FGIFNSLWFSLGAFMQ). An intramembrane segment occupies 601-603 (QGC). Residue Cys-603 is the site of S-palmitoyl cysteine attachment. At 604-609 (DISPRS) the chain is on the cytoplasmic side. Residues 610–630 (LSGRIVGGVWWFFTLIIISSY) traverse the membrane as a helical segment. The Extracellular segment spans residues 631 to 805 (TANLAAFLTV…DKTSALSLSN (175 aa)). Position 645 is a phosphoserine (Ser-645). Positions 668 and 669 each coordinate L-glutamate. Position 710 is a phosphoserine; by PKC (Ser-710). Residue Glu-719 coordinates L-glutamate. Residues Cys-732 and Cys-787 are joined by a disulfide bond. Residues 806–826 (VAGVFYILIGGLGLAMLVALI) form a helical membrane-spanning segment. Residues 827 to 907 (EFCYKSRSES…SGMPLGATGL (81 aa)) are Cytoplasmic-facing. Cys-829 carries S-palmitoyl cysteine lipidation. Ser-849 carries the phosphoserine; by PKC, PKA and CAMK2 modification. A disordered region spans residues 857–881 (STLPRNSGAGASGGGGSGENGRVVS). Ser-863 is subject to Phosphoserine; by PKC, PKA and PKG/PRKG2. Positions 866 to 875 (GASGGGGSGE) are enriched in gly residues. The PDZ-binding motif lies at 904-907 (ATGL).

The protein belongs to the glutamate-gated ion channel (TC 1.A.10.1) family. GRIA1 subfamily. As to quaternary structure, homotetramer or heterotetramer of pore-forming glutamate receptor subunits; heteromeric assembly can be the result of both receptor subtype and flip-flop forms and according the composition, one partner can be dominant with respect to the fast desensitizing current component, whereas the other can determine the steady-state component. Tetramers may be formed by the dimerization of dimers. Found in a complex with GRIA2, GRIA3, GRIA4, CNIH2, CNIH3, CACNG2, CACNG3, CACNG4, CACNG5, CACNG7 and CACNG8. Interacts with HIP1 and RASGRF2. Interacts with SYNDIG1 and GRIA2. Interacts with DLG1 (via C-terminus). Interacts with LRFN1. Interacts with PRKG2. Interacts with CNIH2 and CACNG2. Interacts with CACNG5; this interaction modulates the gating. Interacts (via C-terminus) with PDLIM4 (via LIM domain); this interaction as well as the interaction of PDLIM4 with alpha-actinin is required for their colocalization in early endosomes. Interacts with SNX27 (via PDZ domain); the interaction is required for recycling to the plasma membrane when endocytosed and prevent degradation in lysosomes. Interacts (via PDZ-binding motif) with SHANK3 (via PDZ domain). Interacts with CACNG3; associates GRIA1 with the adapter protein complex 4 (AP-4) to target GRIA1 to the somatodendritic compartment of neurons. Interacts with CACNG2; this interaction mediates traffick to the plasma membrane and modulation of desensitization. Interaction with CNIH2 and CNIH3; this interaction promotes expression at the plasma membrane and extensively modulates their gating properties by slowing deactivation and desensitization kinetics. Found in a complex with GRIA2, GRIA3, GRIA4, DLG4, CACNG8 and CNIH2. Post-translationally, phosphorylated at Ser-645. Phosphorylated at Ser-710 by PKC. Phosphorylated at Ser-849 by PKC, PKA and CAMK2. Phosphorylated at Ser-863 by PKC, PKA and PRKG2. Phosphorylation of Ser-863 is reduced by induction of long-term depression and increased by induction of long-term potentiation. In terms of processing, palmitoylated. Depalmitoylated by CPT1C and upon L-glutamate stimulation. ZDHHC3/GODZ specifically palmitoylates Cys-603, which leads to Golgi retention and decreased cell surface expression. In contrast, Cys-829 palmitoylation does not affect cell surface expression but regulates stimulation-dependent endocytosis. Detected in cerebellum (at protein level).

It localises to the cell membrane. The protein localises to the endoplasmic reticulum membrane. The protein resides in the postsynaptic cell membrane. It is found in the postsynaptic density membrane. Its subcellular location is the cell projection. It localises to the dendrite. The protein localises to the dendritic spine. The protein resides in the early endosome membrane. It is found in the recycling endosome membrane. Its subcellular location is the presynapse. It localises to the synapse. It catalyses the reaction Ca(2+)(in) = Ca(2+)(out). It carries out the reaction Na(+)(in) = Na(+)(out). The enzyme catalyses Mg(2+)(in) = Mg(2+)(out). The catalysed reaction is Li(+)(in) = Li(+)(out). It catalyses the reaction K(+)(in) = K(+)(out). It carries out the reaction Sr(2+)(in) = Sr(2+)(out). With respect to regulation, glutamate-gated receptor activity inhibited by DNQX (6,7-dinitroquinoxaline-2,3-dione). Ionotropic glutamate receptor that functions as a ligand-gated cation channel, gated by L-glutamate and glutamatergic agonists such as alpha-amino-3-hydroxy-5-methyl-4-isoxazolepropionic acid (AMPA), quisqualic acid, and kainic acid. L-glutamate acts as an excitatory neurotransmitter at many synapses in the central nervous system. Binding of the excitatory neurotransmitter L-glutamate induces a conformation change, leading to the opening of the cation channel, and thereby converts the chemical signal to an electrical impulse upon entry of monovalent and divalent cations such as sodium and calcium. The receptor then desensitizes rapidly and enters in a transient inactive state, characterized by the presence of bound agonist. In the presence of CACNG2 or CACNG4 or CACNG7 or CACNG8, shows resensitization which is characterized by a delayed accumulation of current flux upon continued application of L-glutamate. Resensitization is blocked by CNIH2 through interaction with CACNG8 in the CACNG8-containing AMPA receptors complex. Calcium (Ca(2+)) permeability depends on subunits composition and, heteromeric channels containing edited GRIA2 subunit are calcium-impermeable. Also permeable to other divalents cations such as strontium(2+) and magnesium(2+) and monovalent cations such as potassium(1+) and lithium(1+). In Rattus norvegicus (Rat), this protein is Glutamate receptor 1.